A 1294-amino-acid polypeptide reads, in one-letter code: CLIP-associating protein 2 (1294 aa).

Residues 1–61 (MAMGDDKSFD…KVGGASKEGG (61 aa)) form a disordered region. 2 positions are modified to phosphoserine: serine 8 and serine 14. The span at 47-61 (SAGGPKVGGASKEGG) shows a compositional bias: gly residues. The segment at 60-311 (GGAGAVDEDD…KSLQTYLKSS (252 aa)) is TOG 1. HEAT repeat units follow at residues 173–208 (HGAE…IRHT), 209–245 (HVPR…EWQT), and 250–287 (RHAA…HFPG). The tract at residues 314–368 (VASLPQSDRSSSSSQESLNRPFSSKWSTANPSTVAGRVSAGSSKASSLPGSLQRS) is disordered. Phosphoserine occurs at positions 316, 327, and 330. Residues 316–334 (SLPQSDRSSSSSQESLNRP) show a composition bias toward low complexity. Polar residues-rich tracts occupy residues 335–346 (FSSKWSTANPST) and 353–367 (AGSS…SLQR). Phosphoserine is present on residues serine 360, serine 368, serine 370, and serine 407. Positions 409–467 (EDTSDKLDGTASEDGRVRAKLSAPLAGMGNAKADSRGRSRTKMVSQSQPGSRSGSPGRV) are disordered. The span at 411–425 (TSDKLDGTASEDGRV) shows a compositional bias: basic and acidic residues. The segment at 444 to 580 (RGRSRTKMVS…GPGYGISQSS (137 aa)) is interaction with microtubules, MAPRE1 and MAPRE3. Low complexity predominate over residues 453–467 (SQSQPGSRSGSPGRV). Residues serine 455, serine 459, serine 463, serine 478, and serine 489 each carry the phosphoserine modification. The disordered stretch occupies residues 488-557 (ASAQKRSKIP…PLASRHHSRS (70 aa)). The SXIP motif 1; mediates interaction with MAPRE1 and targeting to microtubule plus ends motif lies at 494 to 497 (SKIP). Serine 507 is modified (phosphoserine). Residues 517-520 (SRIP) carry the SXIP motif 2; mediates interaction with MAPRE1 and targeting to microtubule plus ends motif. Serine 525, serine 529, serine 585, serine 587, serine 596, serine 621, and serine 627 each carry phosphoserine. A disordered region spans residues 617–645 (YGMHSDDDANSDASSACSERSYSSRNGSI). Over residues 627–641 (SDASSACSERSYSSR) the composition is skewed to low complexity. The tract at residues 649 to 881 (MRQTEDVAEV…TKLLHNHLRN (233 aa)) is TOG 2. HEAT repeat units lie at residues 710 to 747 (RVFS…KMGA) and 772 to 809 (LQFN…QMDP). A Phosphothreonine modification is found at threonine 787. The segment at 872-1294 (TKLLHNHLRN…DPTTDVSGQS (423 aa)) is interaction with RSN and localization to the Golgi and kinetochores. 2 disordered regions span residues 878 to 928 (HLRN…FDYD) and 952 to 995 (SFRS…DSSQ). 2 stretches are compositionally biased toward polar residues: residues 880 to 892 (RNTG…SMGS) and 901 to 922 (SPAN…TLSP). Position 892 is a phosphoserine (serine 892). A phosphoserine mark is found at serine 952, serine 955, serine 1013, and serine 1029. Residues 955–972 (SQEDMNEPLKRDSKKDDG) show a composition bias toward basic and acidic residues. The required for cortical localization stretch occupies residues 1017 to 1294 (RDYNPYNYSD…DPTTDVSGQS (278 aa)). HEAT repeat units follow at residues 1054 to 1091 (LDHS…TQEE), 1098 to 1135 (EHFK…HQPA), and 1216 to 1253 (LLLP…VIGD).

The protein belongs to the CLASP family. As to quaternary structure, interacts with microtubules. Interacts with MAPRE1; probably required for targeting to the growing microtubule plus ends. Interacts with CLIP2, ERC1, MAPRE3, PHLDB2 and RSN. The interaction with ERC1 may be mediated by PHLDB2. Interacts with GCC2; recruits CLASP2 to Golgi membranes. Interacts with MACF1. Interacts with mtcl2 and MTCL1. In terms of processing, phosphorylated by GSK3B. Phosphorylation reduces MAPRE1 binding. Phosphorylation by GSK3B may negatively regulate binding to microtubule lattices in lamella. In terms of tissue distribution, brain-specific.

Its subcellular location is the cytoplasm. It is found in the cytoskeleton. It localises to the microtubule organizing center. The protein resides in the centrosome. The protein localises to the chromosome. Its subcellular location is the centromere. It is found in the kinetochore. It localises to the spindle. The protein resides in the golgi apparatus. The protein localises to the trans-Golgi network. Its subcellular location is the cell membrane. It is found in the cell projection. It localises to the ruffle membrane. The protein resides in the cell cortex. In terms of biological role, microtubule plus-end tracking protein that promotes the stabilization of dynamic microtubules. Involved in the nucleation of noncentrosomal microtubules originating from the trans-Golgi network (TGN). Required for the polarization of the cytoplasmic microtubule arrays in migrating cells towards the leading edge of the cell. May act at the cell cortex to enhance the frequency of rescue of depolymerizing microtubules by attaching their plus-ends to cortical platforms composed of ERC1 and PHLDB2. This cortical microtubule stabilizing activity is regulated at least in part by phosphatidylinositol 3-kinase signaling. Also performs a similar stabilizing function at the kinetochore which is essential for the bipolar alignment of chromosomes on the mitotic spindle. Acts as a mediator of ERBB2-dependent stabilization of microtubules at the cell cortex. This Homo sapiens (Human) protein is CLIP-associating protein 2 (CLASP2).